We begin with the raw amino-acid sequence, 506 residues long: UDP-N-acetylmuramoyl-L-alanyl-D-glutamate--2,6-diaminopimelate ligase (506 aa).

Ser-42 contributes to the UDP-N-acetyl-alpha-D-muramoyl-L-alanyl-D-glutamate binding site. ATP is bound at residue 125 to 131; sequence GTSGKTT. Residues 166 to 167, Ser-193, and Arg-201 contribute to the UDP-N-acetyl-alpha-D-muramoyl-L-alanyl-D-glutamate site; that span reads TT. Residue Lys-233 is modified to N6-carboxylysine. Meso-2,6-diaminopimelate is bound by residues Arg-395, 419 to 422, Gly-475, and Glu-479; that span reads DNPR. A Meso-diaminopimelate recognition motif motif is present at residues 419–422; that stretch reads DNPR.

It belongs to the MurCDEF family. MurE subfamily. Mg(2+) serves as cofactor. In terms of processing, carboxylation is probably crucial for Mg(2+) binding and, consequently, for the gamma-phosphate positioning of ATP.

The protein localises to the cytoplasm. The catalysed reaction is UDP-N-acetyl-alpha-D-muramoyl-L-alanyl-D-glutamate + meso-2,6-diaminopimelate + ATP = UDP-N-acetyl-alpha-D-muramoyl-L-alanyl-gamma-D-glutamyl-meso-2,6-diaminopimelate + ADP + phosphate + H(+). It functions in the pathway cell wall biogenesis; peptidoglycan biosynthesis. In terms of biological role, catalyzes the addition of meso-diaminopimelic acid to the nucleotide precursor UDP-N-acetylmuramoyl-L-alanyl-D-glutamate (UMAG) in the biosynthesis of bacterial cell-wall peptidoglycan. This chain is UDP-N-acetylmuramoyl-L-alanyl-D-glutamate--2,6-diaminopimelate ligase, found in Streptomyces avermitilis (strain ATCC 31267 / DSM 46492 / JCM 5070 / NBRC 14893 / NCIMB 12804 / NRRL 8165 / MA-4680).